The sequence spans 56 residues: Small integral membrane protein 39 (56 aa).

A helical transmembrane segment spans residues Val-33–Leu-53.

It localises to the membrane. The polypeptide is Small integral membrane protein 39 (Homo sapiens (Human)).